The primary structure comprises 151 residues: Endoribonuclease YbeY (151 aa).

Zn(2+)-binding residues include His-113, His-117, and His-123.

This sequence belongs to the endoribonuclease YbeY family. Zn(2+) is required as a cofactor.

The protein localises to the cytoplasm. In terms of biological role, single strand-specific metallo-endoribonuclease involved in late-stage 70S ribosome quality control and in maturation of the 3' terminus of the 16S rRNA. The polypeptide is Endoribonuclease YbeY (Polaromonas naphthalenivorans (strain CJ2)).